The sequence spans 384 residues: Outer membrane protein assembly factor BamB (384 aa).

Residues 1 to 16 (MKIRILVLILCALTQG) form the signal peptide. The N-palmitoyl cysteine moiety is linked to residue cysteine 17. Cysteine 17 carries the S-diacylglycerol cysteine lipid modification.

The protein belongs to the BamB family. As to quaternary structure, part of the Bam complex.

It is found in the cell outer membrane. Part of the outer membrane protein assembly complex, which is involved in assembly and insertion of beta-barrel proteins into the outer membrane. This chain is Outer membrane protein assembly factor BamB, found in Legionella pneumophila (strain Paris).